The sequence spans 193 residues: Orotate phosphoribosyltransferase (193 aa).

114–122 (EDVITTGGS) contacts 5-phospho-alpha-D-ribose 1-diphosphate. The orotate site is built by Thr-118 and Arg-146.

Belongs to the purine/pyrimidine phosphoribosyltransferase family. PyrE subfamily. Homodimer. Requires Mg(2+) as cofactor.

The catalysed reaction is orotidine 5'-phosphate + diphosphate = orotate + 5-phospho-alpha-D-ribose 1-diphosphate. Its pathway is pyrimidine metabolism; UMP biosynthesis via de novo pathway; UMP from orotate: step 1/2. Catalyzes the transfer of a ribosyl phosphate group from 5-phosphoribose 1-diphosphate to orotate, leading to the formation of orotidine monophosphate (OMP). The polypeptide is Orotate phosphoribosyltransferase (Chlorobium phaeobacteroides (strain BS1)).